Consider the following 669-residue polypeptide: Alpha-1,6-mannosylglycoprotein 6-beta-N-acetylglucosaminyltransferase (669 aa).

Over 1 to 7 (MRRRHRC) the chain is Cytoplasmic. Residues 8-28 (VALLFIFSAFITPLGFFYYTI) form a helical; Signal-anchor for type II membrane protein membrane-spanning segment. The Lumenal segment spans residues 29–669 (SNESKRYSEE…EQHAICKKCL (641 aa)). N-linked (GlcNAc...) asparagine glycans are attached at residues asparagine 30, asparagine 412, asparagine 437, and asparagine 626.

It belongs to the glycosyltransferase 18 family. In terms of tissue distribution, expressed in a complex subset of neurons in larvae and in the spermathecal and pharyngeal-intestinal valves and certain vulval cells of adults.

It localises to the golgi apparatus membrane. The enzyme catalyses N(4)-{beta-D-GlcNAc-(1-&gt;2)-[beta-D-GlcNAc-(1-&gt;4)]-alpha-D-Man-(1-&gt;3)-[beta-D-GlcNAc-(1-&gt;2)-alpha-D-Man-(1-&gt;6)]-beta-D-Man-(1-&gt;4)-beta-D-GlcNAc-(1-&gt;4)-beta-D-GlcNAc}-L-asparaginyl-[protein] + UDP-N-acetyl-alpha-D-glucosamine = N(4)-{beta-D-GlcNAc-(1-&gt;2)-[beta-D-GlcNAc-(1-&gt;4)]-alpha-D-Man-(1-&gt;3)-[beta-D-GlcNAc-(1-&gt;2)-[beta-D-GlcNAc-(1-&gt;6)]-alpha-D-Man-(1-&gt;6)]-beta-D-Man-(1-&gt;4)-beta-D-GlcNAc-(1-&gt;4)-beta-D-GlcNAc}-L-asparaginyl-[protein] + UDP + H(+). It participates in protein modification; protein glycosylation. In terms of biological role, catalyzes the addition of N-acetylglucosamine (GlcNAc) in beta 1-6 linkage to the alpha-linked mannose of biantennary N-linked oligosaccharides. The protein is Alpha-1,6-mannosylglycoprotein 6-beta-N-acetylglucosaminyltransferase (gly-2) of Caenorhabditis elegans.